A 47-amino-acid polypeptide reads, in one-letter code: MSEKKLNQEEFLKILMHAHEIGEQSSEMTTKEMLENLISHIKNGYAT.

This is an uncharacterized protein from Bacillus subtilis (strain 168).